The primary structure comprises 543 residues: Serendipity locus protein alpha (543 aa).

It localises to the cytoplasm. The protein localises to the cell membrane. Functionally, required for the cellularization of the syncytial blastoderm embryo. Involved in the localization of the actin filaments just prior to and during plasma membrane invagination. Sry-alpha together with nullo and bnk may provide auxiliary functions, by acting both to stabilize a large and dynamic microfilament structure and regulate its functions. This chain is Serendipity locus protein alpha (Sry-alpha), found in Drosophila subobscura (Fruit fly).